The sequence spans 90 residues: MTVKQTVEISNKLGMHARPAMKLFELMQNYDAEVLLRNDEGTVAEANSVIALLMLDSAKGRQIEIEANGPQEVEALAAVIALFNAGFDED.

An HPr domain is found at 2–90; that stretch reads TVKQTVEISN…ALFNAGFDED (89 aa). The active-site Pros-phosphohistidine intermediate is His16.

Belongs to the HPr family.

Its subcellular location is the cytoplasm. Component of the phosphoenolpyruvate-dependent nitrogen-metabolic phosphotransferase system (nitrogen-metabolic PTS), that seems to be involved in regulating nitrogen metabolism. The phosphoryl group from phosphoenolpyruvate (PEP) is transferred to the phosphoryl carrier protein NPr by enzyme I-Ntr. Phospho-NPr then transfers it to EIIA-Ntr. Could function in the transcriptional regulation of sigma-54 dependent operons in conjunction with the NPr (PtsO) and EIIA-Ntr (PtsN) proteins. This is Phosphocarrier protein NPr (ptsO) from Klebsiella oxytoca.